Reading from the N-terminus, the 442-residue chain is MKKIECACNFLMDKDAQGYIDLSDLDLTSCHFKGDVISKVSFLSSNLQHVTFECKEIGDCNFTTAIVDNVIFRCRRLHNVIFIKASGECVDFSKNILDTVDFSQSQLGHSNFRECQIRNSNFDNCYLYASHFTRAEFLSAKEISFIKSNLTAVMFDYVRMSTGNFKDCITEQLELTIDYSDIFWNEDLDGYINNIIKMIDTLPDNAMILKSVLAVKLVMQLKILNIVNKNFIENMKKIFSHCPYIKDPIIRSYIHSDEDNKFDDFMRQHRFSEVNFDTQQMIDFINRFNTNKWLIDKNNNFFIQLIDQALRSTDDMIKANVWHLYKEWIRSDDVSPIFIETEDNLRTFNTNELTRNDNIFILFSSVDDGPVMVVSSQRLHDMLNPTKDTNWNSTYIYKSRHEMLPVNLTQETLFSSKSHGKYALFPIFTASWRAHRIMNKGV.

This Escherichia coli (strain K12) protein is Putative protein YjbI (yjbI).